We begin with the raw amino-acid sequence, 105 residues long: UPF0145 protein CPS_2458 (105 aa).

It belongs to the UPF0145 family.

The chain is UPF0145 protein CPS_2458 from Colwellia psychrerythraea (strain 34H / ATCC BAA-681) (Vibrio psychroerythus).